The chain runs to 624 residues: Ubiquitin-associated and SH3 domain-containing protein A (624 aa).

One can recognise a UBA domain in the interval R19–H60. The region spanning V238–E303 is the SH3 domain. Residues R358 to N624 are phosphatase-like.

In terms of assembly, homodimer or homooligomer. Interacts with CBL. Part of a complex containing CBL and activated EGFR. Interacts with ubiquitin and with mono-ubiquitinated proteins. Interacts with dynamin.

It localises to the cytoplasm. The protein resides in the nucleus. Interferes with CBL-mediated down-regulation and degradation of receptor-type tyrosine kinases. Promotes accumulation of activated target receptors, such as T-cell receptors, EGFR and PDGFRB, on the cell surface. May inhibit dynamin-dependent endocytic pathways by functionally sequestering dynamin via its SH3 domain. Exhibits negligible protein tyrosine phosphatase activity at neutral pH. May act as a dominant-negative regulator of UBASH3B-dependent dephosphorylation. This is Ubiquitin-associated and SH3 domain-containing protein A (Ubash3a) from Mus musculus (Mouse).